The primary structure comprises 139 residues: Succinate dehydrogenase assembly factor 2, mitochondrial (139 aa).

The transit peptide at 1–28 (MLRKTNLSNITTLLRSARCMNRMPQLRF) directs the protein to the mitochondrion.

The protein belongs to the SDHAF2 family. Interacts with the flavoprotein subunit within the SDH catalytic dimer.

Its subcellular location is the mitochondrion. The protein localises to the mitochondrion matrix. Its function is as follows. Plays an essential role in the assembly of succinate dehydrogenase (SDH), an enzyme complex (also referred to as respiratory complex II) that is a component of both the tricarboxylic acid (TCA) cycle and the mitochondrial electron transport chain, and which couples the oxidation of succinate to fumarate with the reduction of ubiquinone (coenzyme Q) to ubiquinol. Required for flavinylation (covalent attachment of FAD) of the flavoprotein subunit of the SDH catalytic dimer. The chain is Succinate dehydrogenase assembly factor 2, mitochondrial from Schizosaccharomyces pombe (strain 972 / ATCC 24843) (Fission yeast).